A 114-amino-acid chain; its full sequence is T cell receptor beta variable 25-1 (114 aa).

A signal peptide spans 1 to 21 (MTIRLLCYVGFYFLGAGLMEA). In terms of domain architecture, Ig-like spans 22–114 (DIYQTPRYLV…TSQYLCASSE (93 aa)). Cysteine 42 and cysteine 110 are disulfide-bonded. N-linked (GlcNAc...) asparagine glycosylation is present at asparagine 72.

In terms of assembly, alpha-beta TR is a heterodimer composed of an alpha and beta chain; disulfide-linked. The alpha-beta TR is associated with the transmembrane signaling CD3 coreceptor proteins to form the TR-CD3 (TcR or TCR). The assembly of alpha-beta TR heterodimers with CD3 occurs in the endoplasmic reticulum where a single alpha-beta TR heterodimer associates with one CD3D-CD3E heterodimer, one CD3G-CD3E heterodimer and one CD247 homodimer forming a stable octameric structure. CD3D-CD3E and CD3G-CD3E heterodimers preferentially associate with TR alpha and TR beta chains, respectively. The association of the CD247 homodimer is the last step of TcR assembly in the endoplasmic reticulum and is required for transport to the cell surface.

It is found in the cell membrane. Its function is as follows. V region of the variable domain of T cell receptor (TR) beta chain that participates in the antigen recognition. Alpha-beta T cell receptors are antigen specific receptors which are essential to the immune response and are present on the cell surface of T lymphocytes. Recognize peptide-major histocompatibility (MH) (pMH) complexes that are displayed by antigen presenting cells (APC), a prerequisite for efficient T cell adaptive immunity against pathogens. Binding of alpha-beta TR to pMH complex initiates TR-CD3 clustering on the cell surface and intracellular activation of LCK that phosphorylates the ITAM motifs of CD3G, CD3D, CD3E and CD247 enabling the recruitment of ZAP70. In turn ZAP70 phosphorylates LAT, which recruits numerous signaling molecules to form the LAT signalosome. The LAT signalosome propagates signal branching to three major signaling pathways, the calcium, the mitogen-activated protein kinase (MAPK) kinase and the nuclear factor NF-kappa-B (NF-kB) pathways, leading to the mobilization of transcription factors that are critical for gene expression and essential for T cell growth and differentiation. The T cell repertoire is generated in the thymus, by V-(D)-J rearrangement. This repertoire is then shaped by intrathymic selection events to generate a peripheral T cell pool of self-MH restricted, non-autoaggressive T cells. Post-thymic interaction of alpha-beta TR with the pMH complexes shapes TR structural and functional avidity. The sequence is that of T cell receptor beta variable 25-1 from Homo sapiens (Human).